The chain runs to 246 residues: MSALLILALVGAAVAFPVDDDDKIVGGYTCRESSVPYQVSLNAGYHFCGGSLINDQWVVSAAHCYKYRIQVRLGEHNINVLEGNEQFVDSAKIIRHPNYNSWTLDNDIMLIKLASPVTLNARVASVPLPSSCAPAGTQCLISGWGNTLSNGVNNPDLLQCVDAPVLPQADCEASYPGDITNNMICVGFLEGGKDSCQGDSGGPVVCNGELQGIVSWGYGCAQPDAPGVYTKVCNYVDWIQNTIADN.

The signal sequence occupies residues 1–15 (MSALLILALVGAAVA). A propeptide spans 16 to 23 (FPVDDDDK) (activation peptide). In terms of domain architecture, Peptidase S1 spans 24-244 (IVGGYTCRES…YVDWIQNTIA (221 aa)). 6 disulfide bridges follow: Cys-30-Cys-160, Cys-48-Cys-64, Cys-132-Cys-233, Cys-139-Cys-206, Cys-171-Cys-185, and Cys-196-Cys-220. The active-site Charge relay system is the His-63. The Ca(2+) site is built by Glu-75, Asn-77, Val-80, and Glu-85. Asp-107 functions as the Charge relay system in the catalytic mechanism. Residue Ser-200 is the Charge relay system of the active site.

It belongs to the peptidase S1 family. Ca(2+) is required as a cofactor. Expressed in the pancreas, lung and kidney.

Its subcellular location is the secreted. The protein resides in the extracellular space. The enzyme catalyses Preferential cleavage: Arg-|-Xaa, Lys-|-Xaa.. The chain is Anionic trypsin-2 (Prss2) from Mus musculus (Mouse).